The primary structure comprises 174 residues: UPF0113 protein APE_0516.1 (174 aa).

The protein belongs to the UPF0113 family.

The protein is UPF0113 protein APE_0516.1 of Aeropyrum pernix (strain ATCC 700893 / DSM 11879 / JCM 9820 / NBRC 100138 / K1).